A 552-amino-acid polypeptide reads, in one-letter code: FERRY endosomal RAB5 effector complex subunit 3 (552 aa).

The interval 383–403 (LKESLDSGNQNGGNDDKTKNA) is disordered.

As to quaternary structure, component of the FERRY complex composed of five subunits, TBCK, PPP1R21, FERRY3, CRYZL1 and GATD1 with a ratio of 1:2:1:2:4, respectively.

It is found in the cytoplasm. Its subcellular location is the early endosome. Component of the FERRY complex (Five-subunit Endosomal Rab5 and RNA/ribosome intermediary). The FERRY complex directly interacts with mRNAs and RAB5A, and functions as a RAB5A effector involved in the localization and the distribution of specific mRNAs most likely by mediating their endosomal transport. The complex recruits mRNAs and ribosomes to early endosomes through direct mRNA-interaction. Plays a role in mast cell degranulation. The sequence is that of FERRY endosomal RAB5 effector complex subunit 3 from Pongo abelii (Sumatran orangutan).